Reading from the N-terminus, the 287-residue chain is Probable glucose uptake protein GlcU (287 aa).

The next 9 helical transmembrane spans lie at 7–29 (LIAL…VGGG), 34–56 (IRGT…FAKF), 58–75 (NPTV…WAFG), 114–136 (WSSM…GVAL), 156–178 (MGIL…IFGV), 183–202 (ALFF…SMNH), 209–228 (TALN…FMFY), 233–255 (VGVA…GGIF), and 267–286 (TGIW…LGNL).

It belongs to the GRP transporter (TC 2.A.7.5) family.

Its subcellular location is the cell membrane. Its function is as follows. Involved in the uptake of glucose. This is Probable glucose uptake protein GlcU (glcU) from Staphylococcus aureus (strain MRSA252).